The chain runs to 146 residues: Large ribosomal subunit protein uL15 (146 aa).

Residues 1 to 13 (MKLHELKPAEGSR) show a composition bias toward basic and acidic residues. Positions 1–51 (MKLHELKPAEGSRKVRNRVGRGIGSGNGKTAGRGHKGQNARSGGGVRLGFE) are disordered. Composition is skewed to gly residues over residues 21-31 (RGIGSGNGKTA) and 42-51 (SGGGVRLGFE).

This sequence belongs to the universal ribosomal protein uL15 family. In terms of assembly, part of the 50S ribosomal subunit.

Binds to the 23S rRNA. The sequence is that of Large ribosomal subunit protein uL15 from Bacillus mycoides (strain KBAB4) (Bacillus weihenstephanensis).